The following is a 598-amino-acid chain: Movement protein Hsp70h (598 aa).

Belongs to the heat shock protein 70 family. As to quaternary structure, homomultimer. Interacts with p20. This interaction allows the docking of the latter to the virion.

It is found in the virion. The protein resides in the host cell junction. It localises to the host plasmodesma. Functionally, transports viral genome to neighboring plant cells directly through plasmosdesmata, without any budding. The movement protein allows efficient cell to cell propagation, by bypassing the host cell wall barrier. Two movement proteins, p6, Hsp70h and three structural proteins, CP, CPm, and P64 are essential for cell-cell movement. Also plays a role in virion formation. Together with CPm and p64, encapsidates the 5'-terminal portion of the viral genome. This chain is Movement protein Hsp70h, found in Beta vulgaris (Sugar beet).